The sequence spans 535 residues: Dimethylaniline monooxygenase [N-oxide-forming] 2 (535 aa).

An N-acetylalanine modification is found at A2. FAD is bound by residues 9-13 (GAGVS), E32, 40-41 (LW), and 61-62 (NT). NADP(+)-binding positions include 60–61 (TN) and 195–198 (SAAD). A Glycyl lysine isopeptide (Lys-Gly) (interchain with G-Cter in SUMO) cross-link involves residue K492. The chain crosses the membrane as a helical span at residues 510-530 (APVSFLLKILGLLAVVLAFFF).

This sequence belongs to the FMO family. FAD serves as cofactor. The cofactor is Mg(2+).

Its subcellular location is the microsome membrane. It localises to the endoplasmic reticulum membrane. In terms of biological role, catalyzes the oxidative metabolism of numerous xenobiotics, including mainly therapeutic drugs and insecticides that contain a soft nucleophile, most commonly nitrogen and sulfur and participates to their bioactivation. Catalyzes the S-oxygenation of the prodrug ethionamide (ETA) to the S-oxide (ETASO), the first step in its bioactivation following by the second oxygenation to the sulfinic acid but to a lesser extend. This chain is Dimethylaniline monooxygenase [N-oxide-forming] 2, found in Mus musculus (Mouse).